Reading from the N-terminus, the 246-residue chain is Adenosylcobinamide-GDP ribazoletransferase (246 aa).

6 helical membrane passes run 34–54 (IVTF…VALL), 59–79 (CGVP…TGGF), 113–133 (GGLA…ELLL), 136–156 (IHPI…AALL), 181–201 (TLVT…LQGL), and 203–223 (AALI…RTLG).

It belongs to the CobS family. It depends on Mg(2+) as a cofactor.

The protein resides in the cell inner membrane. The catalysed reaction is alpha-ribazole + adenosylcob(III)inamide-GDP = adenosylcob(III)alamin + GMP + H(+). It catalyses the reaction alpha-ribazole 5'-phosphate + adenosylcob(III)inamide-GDP = adenosylcob(III)alamin 5'-phosphate + GMP + H(+). It participates in cofactor biosynthesis; adenosylcobalamin biosynthesis; adenosylcobalamin from cob(II)yrinate a,c-diamide: step 7/7. In terms of biological role, joins adenosylcobinamide-GDP and alpha-ribazole to generate adenosylcobalamin (Ado-cobalamin). Also synthesizes adenosylcobalamin 5'-phosphate from adenosylcobinamide-GDP and alpha-ribazole 5'-phosphate. This Klebsiella pneumoniae subsp. pneumoniae (strain ATCC 700721 / MGH 78578) protein is Adenosylcobinamide-GDP ribazoletransferase.